The primary structure comprises 689 residues: Glycine--tRNA ligase beta subunit (689 aa).

This sequence belongs to the class-II aminoacyl-tRNA synthetase family. As to quaternary structure, tetramer of two alpha and two beta subunits.

The protein resides in the cytoplasm. The enzyme catalyses tRNA(Gly) + glycine + ATP = glycyl-tRNA(Gly) + AMP + diphosphate. This chain is Glycine--tRNA ligase beta subunit, found in Escherichia coli (strain K12 / MC4100 / BW2952).